Consider the following 301-residue polypeptide: Putative F-box/LRR-repeat protein 19 (301 aa).

The region spanning 18–66 is the F-box domain; that stretch reads PDWSELTRECLLDIFSRLSQEQRWIGPMLVSKNWMNACYDPTLNTIFDL. 5 LRR repeats span residues 108-133, 134-159, 160-185, 231-256, and 257-282; these read IRHC…WIKN, CPNV…DISY, SYGI…KRNL, YSTL…DLRG, and CISL…IKPD.

The chain is Putative F-box/LRR-repeat protein 19 (FBL19) from Arabidopsis thaliana (Mouse-ear cress).